A 246-amino-acid chain; its full sequence is Chloroplastic group IIB intron splicing facilitator CRS2-A, chloroplastic (246 aa).

A chloroplast-targeting transit peptide spans 1–34 (MFCASSSPITSPLYPKAYKFSQTKSNSKRFSSLR). TRNA is bound at residue Tyr64. The active-site Proton acceptor is His69. TRNA contacts are provided by Tyr114, Asn116, and Asn162.

This sequence belongs to the PTH family. CRS2 subfamily. As to quaternary structure, part of large ribonucleo-protein complexes that include group IIB introns and either CAF1 or CAF2.

Its subcellular location is the plastid. It localises to the chloroplast stroma. Its function is as follows. Required for the splicing of group IIB introns in chloroplasts. The chain is Chloroplastic group IIB intron splicing facilitator CRS2-A, chloroplastic (CRS2A) from Arabidopsis thaliana (Mouse-ear cress).